The chain runs to 537 residues: Putative cysteine ligase BshC (537 aa).

A coiled-coil region spans residues 383–451 (MERTQKLLKQ…EVKENQDNFN (69 aa)).

The protein belongs to the BshC family.

Functionally, involved in bacillithiol (BSH) biosynthesis. May catalyze the last step of the pathway, the addition of cysteine to glucosamine malate (GlcN-Mal) to generate BSH. The polypeptide is Putative cysteine ligase BshC (Staphylococcus haemolyticus (strain JCSC1435)).